A 516-amino-acid polypeptide reads, in one-letter code: Facilitated glucose transporter homolog (516 aa).

The interval 1–37 (MNAVVASQNKNDRSFSNMESESSSNVEKSEKENHHQS) is disordered. At 1 to 47 (MNAVVASQNKNDRSFSNMESESSSNVEKSEKENHHQSLPDENWTPFL) the chain is on the cytoplasmic side. The span at 14–26 (SFSNMESESSSNV) shows a compositional bias: low complexity. The span at 27–37 (EKSEKENHHQS) shows a compositional bias: basic and acidic residues. A helical membrane pass occupies residues 48–68 (FFCISSIALASFQDGFQIGCI). Topologically, residues 69–101 (NAPGPLIIDWIKKCHFELFGEVLSQYQADFIWS) are extracellular. A helical membrane pass occupies residues 102–122 (VAVSMFSVGGMFGSFCSGFLA). At 123 to 138 (DKFGRKSTLLYNNILA) the chain is on the cytoplasmic side. A helical membrane pass occupies residues 139 to 159 (LLAAVCLSTSKLFNFYPMIVF). The Extracellular portion of the chain corresponds to 160–161 (GR). A helical membrane pass occupies residues 162–182 (FLVGLNCGITSGLVPMFLTEL). Residues 183–200 (APANLRGKCGSFHQLNIS) lie on the Cytoplasmic side of the membrane. Residues 201-221 (VAIVLSQALGLPQIFGTQVGW) form a helical membrane-spanning segment. A topological domain (extracellular) is located at residue Pro222. The helical transmembrane segment at 223 to 243 (YIFACVAIPTFLQLATIPFCV) threads the bilayer. Topologically, residues 244–306 (ESPKYLISKL…SLFKGDNQWP (63 aa)) are cytoplasmic. The helical transmembrane segment at 307 to 327 (MIVSILMMFSQQFSGISAVTF) threads the bilayer. Residues 328-344 (YSTLIFKRNGLSGNEPM) lie on the Extracellular side of the membrane. A helical transmembrane segment spans residues 345 to 365 (YATVGFGCIKLIATFGCLFLI). Residues 366–376 (DHPKFGRKRLH) are Cytoplasmic-facing. A helical transmembrane segment spans residues 377 to 397 (IAGLSGMCISSILIVITLTLS). The Extracellular portion of the chain corresponds to 398–409 (NAGYHWASYMNV). A helical membrane pass occupies residues 410-430 (LFILSFVVTFAFGPGPIPWFF). Topologically, residues 431-444 (TSELFDSATRGRAA) are cytoplasmic. The helical transmembrane segment at 445-465 (AVSATSNWVANWMVGLTFLPI) threads the bilayer. Topologically, residues 466–471 (NNIIHQ) are extracellular. The helical transmembrane segment at 472 to 492 (YAFLMFTFFTFTFAIFTWKFV) threads the bilayer. Topologically, residues 493 to 516 (PETKGKSPSAIRKELAFMRKRICS) are cytoplasmic.

The protein belongs to the major facilitator superfamily. Sugar transporter (TC 2.A.1.1) family. In terms of tissue distribution, expressed in seam cells from the early embryonic stage through the L2 stage (at protein level).

Its subcellular location is the cell membrane. Appears to have no transport activity for glucose. This is Facilitated glucose transporter homolog from Caenorhabditis elegans.